Consider the following 283-residue polypeptide: Pantothenate synthetase (283 aa).

30–37 contributes to the ATP binding site; sequence MGNLHDAH. His-37 acts as the Proton donor in catalysis. Gln-61 provides a ligand contact to (R)-pantoate. A beta-alanine-binding site is contributed by Gln-61. Residue 149 to 152 coordinates ATP; it reads GVKD. Gln-155 contacts (R)-pantoate. ATP is bound by residues Val-178 and 186 to 189; that span reads MSSR.

The protein belongs to the pantothenate synthetase family. As to quaternary structure, homodimer.

The protein resides in the cytoplasm. The enzyme catalyses (R)-pantoate + beta-alanine + ATP = (R)-pantothenate + AMP + diphosphate + H(+). Its pathway is cofactor biosynthesis; (R)-pantothenate biosynthesis; (R)-pantothenate from (R)-pantoate and beta-alanine: step 1/1. Functionally, catalyzes the condensation of pantoate with beta-alanine in an ATP-dependent reaction via a pantoyl-adenylate intermediate. In Cellvibrio japonicus (strain Ueda107) (Pseudomonas fluorescens subsp. cellulosa), this protein is Pantothenate synthetase.